Reading from the N-terminus, the 242-residue chain is Probable transcriptional regulatory protein Bcep18194_A5621 (242 aa).

Belongs to the TACO1 family.

The protein localises to the cytoplasm. The protein is Probable transcriptional regulatory protein Bcep18194_A5621 of Burkholderia lata (strain ATCC 17760 / DSM 23089 / LMG 22485 / NCIMB 9086 / R18194 / 383).